The primary structure comprises 478 residues: Allene oxide synthase 2 (478 aa).

Residues Lys88, His119, and Lys123 each contribute to the heme b site. Asn278 provides a ligand contact to (13S)-hydroperoxy-(9Z,11E,15Z)-octadecatrienoate. Residues Lys427 and Cys429 each coordinate heme b.

It belongs to the cytochrome P450 family. Heme b serves as cofactor. As to expression, weakly expressed in roots, shoots, leaves and flowers.

It catalyses the reaction (13S)-hydroperoxy-(9Z,11E,15Z)-octadecatrienoate = (9Z,13S,15Z)-12,13-epoxyoctadeca-9,11,15-trienoate + H2O. The protein operates within lipid metabolism; oxylipin biosynthesis. Its function is as follows. Involved in the biosynthesis of jasmonic acid, a growth regulator that is implicated also as a signaling molecule in plant defense. Converts 13-hydroperoxylinolenic acid to 12,13-epoxylinolenic acid. This Oryza sativa subsp. japonica (Rice) protein is Allene oxide synthase 2 (CYP74A2).